Here is a 173-residue protein sequence, read N- to C-terminus: Protein tyrosine phosphatase type IVA 3 (173 aa).

The Tyrosine-protein phosphatase domain occupies 8-161 (APVEVSYKHM…YRPKQRLRFK (154 aa)). A disulfide bridge connects residues Cys-49 and Cys-104. Asp-72 functions as the Proton donor in the catalytic mechanism. The active-site Phosphocysteine intermediate is Cys-104. Arg-110 contributes to the substrate binding site. Position 170 is a cysteine methyl ester (Cys-170). The S-farnesyl cysteine moiety is linked to residue Cys-170. The propeptide at 171-173 (CVM) is removed in mature form.

This sequence belongs to the protein-tyrosine phosphatase family. Interacts with tubulin. In terms of processing, farnesylated. Farnesylation is required for membrane targeting. In terms of tissue distribution, mainly expressed in cardiomyocytes and skeletal muscle; also found in pancreas. Consistently overexpressed in colon cancer metastasis.

It is found in the cell membrane. It localises to the early endosome. The catalysed reaction is O-phospho-L-tyrosyl-[protein] + H2O = L-tyrosyl-[protein] + phosphate. Inhibited by sodium orthovanadate and peroxovanadium compounds, and by pentamidine. In terms of biological role, protein tyrosine phosphatase which stimulates progression from G1 into S phase during mitosis. Enhances cell proliferation, cell motility and invasive activity, and promotes cancer metastasis. May be involved in the progression of cardiac hypertrophy by inhibiting intracellular calcium mobilization in response to angiotensin II. This is Protein tyrosine phosphatase type IVA 3 (PTP4A3) from Homo sapiens (Human).